The primary structure comprises 316 residues: MTDTFQHISVLLHESIDGLAIKPDGIYIDGTFGRGGHSRTILSKLGEHGRLYSIDRDPQAIAEAGKIDDPRFTIIHGPFSGMANYAEQYDLVGKVDGVLLDLGVSSPQLDDAERGFSFMKDGPLDMRMDPTSGIPVSQWLMEADLDDITWVIREFGEDKHARRIAKAIVAHREDETKEPLTRTSQLAKLISEAAPKSFKEKKHPATRAFQAFRIYINSELEEIDTALKGAASILAPEGRLSVISFHSLEDRMVKRFMRKESKGPEVPHGIPLTEAQIKALGSANMKTVGKAIMPTAQEIELNPRSRSSVLRIAEKL.

S-adenosyl-L-methionine contacts are provided by residues 35-37 (GGH), aspartate 55, phenylalanine 79, aspartate 101, and glutamine 108.

Belongs to the methyltransferase superfamily. RsmH family.

It is found in the cytoplasm. It carries out the reaction cytidine(1402) in 16S rRNA + S-adenosyl-L-methionine = N(4)-methylcytidine(1402) in 16S rRNA + S-adenosyl-L-homocysteine + H(+). Functionally, specifically methylates the N4 position of cytidine in position 1402 (C1402) of 16S rRNA. This Vibrio vulnificus (strain CMCP6) protein is Ribosomal RNA small subunit methyltransferase H.